Here is a 118-residue protein sequence, read N- to C-terminus: Large ribosomal subunit protein bL19 (118 aa).

Belongs to the bacterial ribosomal protein bL19 family.

Its function is as follows. This protein is located at the 30S-50S ribosomal subunit interface and may play a role in the structure and function of the aminoacyl-tRNA binding site. The protein is Large ribosomal subunit protein bL19 of Aliarcobacter butzleri (strain RM4018) (Arcobacter butzleri).